A 673-amino-acid polypeptide reads, in one-letter code: Polyadenylate-binding protein, cytoplasmic and nuclear (673 aa).

Residues 1–39 (MSAETATSPAPAAETPVAPAPATQTTPAEGAPTPAAAAP) are disordered. RRM domains lie at 46–124 (ASLY…WSQR), 134–211 (GNIF…HHVG), 227–304 (TNVY…RAQT), and 330–407 (VNLY…LAQR). The segment at 300-322 (GRAQTKSEREAELKKSHEEKRLE) is disordered. A compositionally biased stretch (basic and acidic residues) spans 304-322 (TKSEREAELKKSHEEKRLE). Disordered regions lie at residues 509–572 (APGY…AGRL) and 644–673 (WGKD…EKKE). Residues 569–646 (AGRLDAQSLA…ALRVLAEWGK (78 aa)) enclose the PABC domain.

This sequence belongs to the polyadenylate-binding protein type-1 family.

It localises to the cytoplasm. The protein localises to the nucleus. In terms of biological role, binds the poly(A) tail of mRNA. Appears to be an important mediator of the multiple roles of the poly(A) tail in mRNA biogenesis, stability and translation. In the nucleus, involved in both mRNA cleavage and polyadenylation. Is also required for efficient mRNA export to the cytoplasm. Acts in concert with a poly(A)-specific nuclease (PAN) to affect poly(A) tail shortening, which may occur concomitantly with either nucleocytoplasmic mRNA transport or translational initiation. In the cytoplasm, stimulates translation initiation and regulates mRNA decay through translation termination-coupled poly(A) shortening, probably mediated by PAN. This chain is Polyadenylate-binding protein, cytoplasmic and nuclear (PAB1), found in Cryptococcus neoformans var. neoformans serotype D (strain B-3501A) (Filobasidiella neoformans).